A 60-amino-acid chain; its full sequence is Small ribosomal subunit protein uS10 (60 aa).

The protein belongs to the universal ribosomal protein uS10 family.

This chain is Small ribosomal subunit protein uS10 (RPS20), found in Zea mays (Maize).